The sequence spans 334 residues: N-chimaerin (334 aa).

Residues 1 to 10 (MPSKESWSGR) show a composition bias toward polar residues. A disordered region spans residues 1 to 22 (MPSKESWSGRKTNRATVHKSKQ). At T67 the chain carries Phosphothreonine. Residues 80–130 (VHNFKVHTFRGPHWCEYCANFMWGLIAQGVKCADCGLNVHKQCSKMVPNDC) form a Phorbol-ester/DAG-type zinc finger. Residues 143–334 (CDLTTLVKAR…LLIKNEDILF (192 aa)) form the Rho-GAP domain. Phosphothreonine is present on T215.

Interacts with EPHA4; effector of EPHA4 in axon guidance linking EPHA4 activation to RAC1 regulation. In terms of processing, phosphorylated. Phosphorylation is EPHA4 kinase activity-dependent.

GTPase-activating protein for p21-rac and a phorbol ester receptor. Involved in the assembly of neuronal locomotor circuits as a direct effector of EPHA4 in axon guidance. The polypeptide is N-chimaerin (CHN1) (Bos taurus (Bovine)).